The primary structure comprises 465 residues: 2-methylcitrate synthase, mitochondrial (465 aa).

The N-terminal 29 residues, 1–29 (MAMTMRSTRHASKLAQTARLALTNSRRYS), are a transit peptide targeting the mitochondrion. Positions 74 and 192 each coordinate CoA. His269 is an oxaloacetate binding site. Leu304 is a CoA binding site. The active site involves His305. CoA contacts are provided by Val346, Gly348, and Tyr349. Oxaloacetate-binding residues include His351 and Arg360. The active site involves His351. Positions 400, 401, and 406 each coordinate CoA. Asp408 is a catalytic residue. 2 residues coordinate oxaloacetate: Arg434 and Arg454.

It belongs to the citrate synthase family. As to quaternary structure, homodimer.

It localises to the mitochondrion matrix. It carries out the reaction propanoyl-CoA + oxaloacetate + H2O = (2S,3S)-2-methylcitrate + CoA + H(+). It catalyses the reaction oxaloacetate + acetyl-CoA + H2O = citrate + CoA + H(+). The protein operates within organic acid metabolism; propanoate degradation. In terms of biological role, component of the methylcitrate cycle that catalyzes the synthesis of (2S,3S)-2-methylcitrate from propionyl-CoA and oxaloacetate. Plays an important role in detoxification of propionyl-CoA, an inhibitor of both primary and secondary metabolism. Also has citrate synthase activity using as substrates acetyl-CoA and oxaloacetate. Plays a key role in the estabishment of invasive pulmonary aspergillosis. The polypeptide is 2-methylcitrate synthase, mitochondrial (Aspergillus fumigatus (strain CBS 144.89 / FGSC A1163 / CEA10) (Neosartorya fumigata)).